The chain runs to 538 residues: MAKLIAFDQDAREGILRGVDALANAVKVTLGPRGRNVVLDKAFGGPLVTNDGVTIARDIDLEDPFENLGAQLVKSVAVKTNDIAGDGTTTATLLAQALIAEGLRNVAAGANPMELNKGIAAAAEKTLEELKARATEVSDTKEIANVATVSSRDEVVGEIVAAAMEKVGKDGVVTVEESQSIETALEVTEGISFDKGYLSPYFINDNDTQQAVLDNPAVLLVRNKISSLPDFLPLLEKVVESNRPLLIIAEDVEGEPLQTLVVNSIRKTIKVVAVKSPYFGDRRKAFMDDLAIVTKATVVDPEVGINLNEAGEEVFGTARRITVSKDETVIVDGAGSAEEVEARRAQIRREIANTDSTWDREKAEERLAKLSGGIAVIRVGAATETEVNDRKLRVEDAINAARAAAQEGVIAGGGSALVQIAETLKAYAEEFEGDQKVGVRALATALGKPAYWIASNAGLDGSVVVARTAALPNGEGFNAATLEYGNLINDGVIDPVKVTHSAVVNATSVARMVLTTEASVVEKPAEEAADAHAGHHHH.

ATP is bound by residues 29 to 32, 86 to 90, Gly413, 478 to 480, and Asp494; these read TLGP, DGTTT, and NAA.

The protein belongs to the chaperonin (HSP60) family. In terms of assembly, forms a cylinder of 14 subunits composed of two heptameric rings stacked back-to-back. Interacts with the co-chaperonin GroES.

It is found in the cytoplasm. The enzyme catalyses ATP + H2O + a folded polypeptide = ADP + phosphate + an unfolded polypeptide.. Together with its co-chaperonin GroES, plays an essential role in assisting protein folding. The GroEL-GroES system forms a nano-cage that allows encapsulation of the non-native substrate proteins and provides a physical environment optimized to promote and accelerate protein folding. The sequence is that of Chaperonin GroEL 1 from Corynebacterium glutamicum (strain R).